Reading from the N-terminus, the 429-residue chain is Gamma-glutamyl phosphate reductase (429 aa).

It belongs to the gamma-glutamyl phosphate reductase family.

It localises to the cytoplasm. It carries out the reaction L-glutamate 5-semialdehyde + phosphate + NADP(+) = L-glutamyl 5-phosphate + NADPH + H(+). It functions in the pathway amino-acid biosynthesis; L-proline biosynthesis; L-glutamate 5-semialdehyde from L-glutamate: step 2/2. Catalyzes the NADPH-dependent reduction of L-glutamate 5-phosphate into L-glutamate 5-semialdehyde and phosphate. The product spontaneously undergoes cyclization to form 1-pyrroline-5-carboxylate. The polypeptide is Gamma-glutamyl phosphate reductase (Sphingopyxis alaskensis (strain DSM 13593 / LMG 18877 / RB2256) (Sphingomonas alaskensis)).